The sequence spans 192 residues: 3-hydroxyanthranilate 3,4-dioxygenase (192 aa).

R50 is an O2 binding site. Fe cation contacts are provided by H54, E60, and H102. Residue E60 participates in substrate binding. Residues R106 and E116 each coordinate substrate. Residues C131, C134, C168, and C171 each contribute to the a divalent metal cation site.

This sequence belongs to the 3-HAO family. The cofactor is Fe(2+).

The protein resides in the cytoplasm. The enzyme catalyses 3-hydroxyanthranilate + O2 = (2Z,4Z)-2-amino-3-carboxymuconate 6-semialdehyde. The protein operates within cofactor biosynthesis; NAD(+) biosynthesis; quinolinate from L-kynurenine: step 3/3. Functionally, catalyzes the oxidative ring opening of 3-hydroxyanthranilate to 2-amino-3-carboxymuconate semialdehyde, which spontaneously cyclizes to quinolinate. This Neosartorya fischeri (strain ATCC 1020 / DSM 3700 / CBS 544.65 / FGSC A1164 / JCM 1740 / NRRL 181 / WB 181) (Aspergillus fischerianus) protein is 3-hydroxyanthranilate 3,4-dioxygenase (bna1).